The following is a 156-amino-acid chain: Small ribosomal subunit protein uS7 (156 aa).

Belongs to the universal ribosomal protein uS7 family. In terms of assembly, part of the 30S ribosomal subunit. Contacts proteins S9 and S11.

Functionally, one of the primary rRNA binding proteins, it binds directly to 16S rRNA where it nucleates assembly of the head domain of the 30S subunit. Is located at the subunit interface close to the decoding center, probably blocks exit of the E-site tRNA. The chain is Small ribosomal subunit protein uS7 from Acaryochloris marina (strain MBIC 11017).